We begin with the raw amino-acid sequence, 279 residues long: MEKNCGSGQSKLKALRMHIYFEVDFQEQAQHYQAVLHSRGVTVDLQPIEKLNARFLRLNPDLALCVDENGLWLSANGMKMQPDWKAEIPRLKRASLKSEMIARACQLGEKPVLVDATAGLGHDSLLMAYLGAQIQLVERHPILFTLLEDSKAQAQRDPFLSQFMDRIQLIFADSASYLKQLDQEEKTVDVVYLDPMFPQRDQNQQAIKKQAQVKKQMQLLHLLLPEDGEMDLGGHLLELAKKVAKRVIVKRPRHAIFLANQEPAHQWQGDACRFDAYFQ.

S-adenosyl-L-methionine is bound by residues 138 to 139 and Asp-194; that span reads ER.

It belongs to the methyltransferase superfamily. RsmJ family.

It localises to the cytoplasm. The catalysed reaction is guanosine(1516) in 16S rRNA + S-adenosyl-L-methionine = N(2)-methylguanosine(1516) in 16S rRNA + S-adenosyl-L-homocysteine + H(+). Its function is as follows. Specifically methylates the guanosine in position 1516 of 16S rRNA. The chain is Ribosomal RNA small subunit methyltransferase J from Acinetobacter baumannii (strain SDF).